Reading from the N-terminus, the 224-residue chain is UPF0758 protein LCA_0852 (224 aa).

The MPN domain occupies 100-222 (VVASSQMVGQ…YLSLREEGYL (123 aa)). 3 residues coordinate Zn(2+): His171, His173, and Asp184. The JAMM motif motif lies at 171–184 (HNHPSGQLAPSTQD).

Belongs to the UPF0758 family.

The protein is UPF0758 protein LCA_0852 of Latilactobacillus sakei subsp. sakei (strain 23K) (Lactobacillus sakei subsp. sakei).